Here is a 362-residue protein sequence, read N- to C-terminus: tRNA-specific 2-thiouridylase MnmA (362 aa).

ATP-binding positions include 13–20 (GLSGGVDS) and Met-39. The interaction with target base in tRNA stretch occupies residues 99 to 101 (NPD). Catalysis depends on Cys-104, which acts as the Nucleophile. Cys-104 and Cys-200 form a disulfide bridge. Position 128 (Gly-128) interacts with ATP. Positions 150-152 (KDQ) are interaction with tRNA. Cys-200 acts as the Cysteine persulfide intermediate in catalysis.

Belongs to the MnmA/TRMU family.

It is found in the cytoplasm. The enzyme catalyses S-sulfanyl-L-cysteinyl-[protein] + uridine(34) in tRNA + AH2 + ATP = 2-thiouridine(34) in tRNA + L-cysteinyl-[protein] + A + AMP + diphosphate + H(+). In terms of biological role, catalyzes the 2-thiolation of uridine at the wobble position (U34) of tRNA, leading to the formation of s(2)U34. The chain is tRNA-specific 2-thiouridylase MnmA from Coxiella burnetii (strain RSA 493 / Nine Mile phase I).